The primary structure comprises 772 residues: Angiomotin-like protein 2 (772 aa).

Disordered stretches follow at residues 41 to 158 (GGAG…HVRS), 170 to 239 (RNGA…SPHF), and 260 to 299 (QYQY…PSAQ). 3 stretches are compositionally biased toward basic and acidic residues: residues 80–91 (QGGETHLAENRL), 100–112 (KGEE…EAKA), and 142–153 (RRQDEALRELRH). The interval 101 to 303 (GEELPTYEEA…GPPSAQATLG (203 aa)) is required for interaction with CDH5. Tyr-107 is modified (phosphotyrosine; by FGFR1). Residues 178–191 (HMSSSHSFPQLARS) are compositionally biased toward polar residues. The segment covering 197–214 (PRGPPAEGPEPRGPPPQY) has biased composition (pro residues). A required for interaction with CDH1 region spans residues 221 to 303 (QETAAVTDPR…GPPSAQATLG (83 aa)). Residues 305–578 (AHLAQMETVL…KYLEERAMRQ (274 aa)) adopt a coiled-coil conformation. Residues Lys-343 and Lys-404 each participate in a glycyl lysine isopeptide (Lys-Gly) (interchain with G-Cter in ubiquitin) cross-link. 2 disordered regions span residues 596-615 (IRHS…LLPG) and 680-752 (GLVS…RTPS). The segment covering 686-699 (RQTDARPAGDRVPA) has biased composition (basic and acidic residues). Residues 718–733 (DGSTQTDGPADNTSAC) show a composition bias toward polar residues. Phosphoserine occurs at positions 752 and 755. Residues 769-772 (EILI) carry the PDZ-binding motif.

This sequence belongs to the angiomotin family. Part of a complex composed of AMOTL2, MAGI1 and CDH5, within the complex AMOTL2 acts as a scaffold protein for the interaction of MAGI1 with CDH5. The complex is required for coupling actin fibers to cell junctions in endothelial cells. Within the complex AMOTL2 (via its N-terminus) interacts with CDH5. Interacts (via N-terminus) with MAGI1. Interacts (via N-terminus) with ACTB; the interaction facilitates binding of cell junction complexes to actin fibers in endothelial cells. Interacts with CDH1; the interaction may facilitate binding of radial actin fibers to cell junction complexes. Interacts with SRC. Interacts with YAP1; the interaction is required for ubiquitination of AMOTL2 and localization of YAP1 to tight junctions. Interacts with WWP1; the interaction facilitates WWP1 interaction with the Crumbs complex and subsequent WWP1 translocation to the plasma membrane. WWP1 interaction with the Crumbs complex promotes WWP1 monoubiquitination of AMOTL2 which subsequently activates the Hippo signaling pathway. When ubiquitinated interacts with LATS2 (via UBA domain); the interaction promotes LATS2 phosphorylation of YAP1. Interacts (via PPXY motif) with WWTR1/TAZ (via WW domain); the interaction promotes WWTR1/TAZ localization to the cytoplasm and thereby inhibition of its transcriptional properties. Interacts with PHLDB2; interaction may facilitate PHLDB2 localization to the myotube podosome cortex that surrounds the core. In terms of processing, phosphorylation at Tyr-107 is necessary for efficient binding to SRC and synergistically functioning with SRC to activate the downstream MAPK pathway. Monoubiquitinated at Lys-343 and Lys-404 by Crumbs complex-bound WWP1. De-ubiquitinated at Lys-343 and Lys-404 by USP9X; the interaction may be promoted by cell contact inhibition. Deubiquitination of AMOTL2 negatively regulates Hippo signaling activation. In terms of tissue distribution, expressed in skeletal muscle at neuromuscular junctions (at protein level).

The protein localises to the recycling endosome. It localises to the cytoplasm. Its subcellular location is the cell projection. It is found in the podosome. The protein resides in the cell junction. Its function is as follows. Regulates the translocation of phosphorylated SRC to peripheral cell-matrix adhesion sites. Required for proper architecture of actin filaments. Plays a role in coupling actin fibers to cell junctions in endothelial cells and is therefore required for correct endothelial cell morphology via facilitating transcellular transmission of mechanical force resulting in endothelial cell elongation. Required for the anchoring of radial actin fibers to CDH1 junction complexes at the cell membrane which facilitates organization of radial actin fiber structure and cellular response to contractile forces. This contributes to maintenance of cell area, size, shape, epithelial sheet organization and trophectoderm cell properties that facilitate blastocyst zona hatching. Inhibits the Wnt/beta-catenin signaling pathway, probably by recruiting CTNNB1 to recycling endosomes and hence preventing its translocation to the nucleus. Participates in angiogenesis. Activates the Hippo signaling pathway in response to cell contact inhibition via interaction with and ubiquitination by Crumbs complex-bound WWP1. Ubiquitinated AMOTL2 then interacts with LATS2 which in turn phosphorylates YAP1, excluding it from the nucleus and localizing it to the cytoplasm and tight junctions, therefore ultimately repressing YAP1-driven transcription of target genes. Acts to inhibit WWTR1/TAZ transcriptional coactivator activity via sequestering WWTR1/TAZ in the cytoplasm and at tight junctions. Regulates the size and protein composition of the podosome cortex and core at myofibril neuromuscular junctions. Selectively promotes FGF-induced MAPK activation through SRC. May play a role in the polarity, proliferation and migration of endothelial cells. This chain is Angiomotin-like protein 2, found in Mus musculus (Mouse).